The primary structure comprises 690 residues: ATP-dependent DNA helicase Hel308 (690 aa).

ATP contacts are provided by residues Gln26 and 45–52; that span reads IPTASGKT. The 157-residue stretch at 32-188 folds into the Helicase ATP-binding domain; sequence AGYLESEDNY…WLDARVVEHD (157 aa). The short motif at 133-136 is the DEAH box element; it reads DEFH. The region spanning 208–417 is the Helicase C-terminal domain; the sequence is EKNDVVLKVL…NRDALYRQII (210 aa).

It belongs to the helicase family. Hel308 subfamily. In terms of assembly, monomer. Binds replication protein A (RPA), in presence and absence of DNA.

The catalysed reaction is Couples ATP hydrolysis with the unwinding of duplex DNA by translocating in the 3'-5' direction.. The enzyme catalyses ATP + H2O = ADP + phosphate + H(+). DNA-dependent ATPase and 3'-5' DNA helicase that may be involved in repair of stalled replication forks. Helicase with 3'-to 5'- polarity; able to unwind over 100 bp of DNA at 50 degrees Celsius. Unwinds forked DNA, preferentially on lagging strand forks; has weaker activity on Holliday junctions. Displaces the invading strand in DNA D-loops. Unwinds short oligonucleotides from dsDNA with 3'- but not blunt ends or 5'-ssDNA tails in an ATP-dependent manner. ATPase activity is stimulated by ssDNA but not dsDNA, protein binds ssDNA, dsDNA with 5'- or 3'-overhangs but not blunt ended dsDNA and replication forks. Replication forks bind both this protein and RPA. RPA does not stimulate the helicase activity of this protein. This chain is ATP-dependent DNA helicase Hel308, found in Methanothermobacter thermautotrophicus (strain ATCC 29096 / DSM 1053 / JCM 10044 / NBRC 100330 / Delta H) (Methanobacterium thermoautotrophicum).